A 289-amino-acid polypeptide reads, in one-letter code: ATP phosphoribosyltransferase (289 aa).

It belongs to the ATP phosphoribosyltransferase family. Long subfamily. Requires Mg(2+) as cofactor.

Its subcellular location is the cytoplasm. The catalysed reaction is 1-(5-phospho-beta-D-ribosyl)-ATP + diphosphate = 5-phospho-alpha-D-ribose 1-diphosphate + ATP. Its pathway is amino-acid biosynthesis; L-histidine biosynthesis; L-histidine from 5-phospho-alpha-D-ribose 1-diphosphate: step 1/9. Feedback inhibited by histidine. In terms of biological role, catalyzes the condensation of ATP and 5-phosphoribose 1-diphosphate to form N'-(5'-phosphoribosyl)-ATP (PR-ATP). Has a crucial role in the pathway because the rate of histidine biosynthesis seems to be controlled primarily by regulation of HisG enzymatic activity. The sequence is that of ATP phosphoribosyltransferase from Desulforudis audaxviator (strain MP104C).